We begin with the raw amino-acid sequence, 264 residues long: MTNSLLICFTILGLAASSPTKPIGDIRIVGGEDIVITEAPYQVSVMFRGAHSCGGTLVAADIVVTAAHCVMSFAPEDYRIRVGSSFHQRDGMLYDVGDLAWHPDFNFASMDNDIAILWLPKPVMFGDTVEAIEMVETNSEIPDGDITIVTGWGHMEEGGGNPSVLQRVIVPKINEAACAEAYSPIYAITPRMLCAGTPEGGKDACQGDSGGPLVHKKKLAGIVSWGLGCARPEYPGVYTKVSALREWVDENITNLRLKHILRRF.

The signal sequence occupies residues 1-15 (MTNSLLICFTILGLA). A propeptide spans 16–27 (ASSPTKPIGDIR) (activation peptide). Residues 28 to 253 (IVGGEDIVIT…LREWVDENIT (226 aa)) form the Peptidase S1 domain. A disulfide bridge connects residues C53 and C69. Active-site charge relay system residues include H68 and D113. C178 and C194 are disulfide-bonded. D203 contributes to the substrate binding site. The cysteines at positions 205 and 229 are disulfide-linked. Catalysis depends on S209, which acts as the Charge relay system. The N-linked (GlcNAc...) asparagine glycan is linked to N251.

Belongs to the peptidase S1 family. In terms of processing, cleavage after Arg-27 leads to beta-VTN protease and subsequent cleavage after Arg-89 leads to alpha-VTN.

Functionally, responsible for the degradation of vitellin in eggs at the head pigmentation stage. In Bombyx mori (Silk moth), this protein is Vitellin-degrading protease.